The sequence spans 239 residues: UDP-2,3-diacylglucosamine hydrolase (239 aa).

Asp-8, His-10, Asp-41, Asn-78, and His-113 together coordinate Mn(2+). 78–79 (NR) is a binding site for substrate. Asp-121, Ser-159, Asn-163, Lys-166, and His-194 together coordinate substrate. Mn(2+) is bound by residues His-194 and His-196.

Belongs to the LpxH family. Requires Mn(2+) as cofactor.

It is found in the cell inner membrane. The catalysed reaction is UDP-2-N,3-O-bis[(3R)-3-hydroxytetradecanoyl]-alpha-D-glucosamine + H2O = 2-N,3-O-bis[(3R)-3-hydroxytetradecanoyl]-alpha-D-glucosaminyl 1-phosphate + UMP + 2 H(+). Its pathway is glycolipid biosynthesis; lipid IV(A) biosynthesis; lipid IV(A) from (3R)-3-hydroxytetradecanoyl-[acyl-carrier-protein] and UDP-N-acetyl-alpha-D-glucosamine: step 4/6. Hydrolyzes the pyrophosphate bond of UDP-2,3-diacylglucosamine to yield 2,3-diacylglucosamine 1-phosphate (lipid X) and UMP by catalyzing the attack of water at the alpha-P atom. Involved in the biosynthesis of lipid A, a phosphorylated glycolipid that anchors the lipopolysaccharide to the outer membrane of the cell. This is UDP-2,3-diacylglucosamine hydrolase from Shewanella sp. (strain MR-7).